Reading from the N-terminus, the 441-residue chain is uncharacterized protein (441 aa).

This sequence belongs to the outer membrane factor (OMF) (TC 1.B.17) family.

This is an uncharacterized protein from Haemophilus influenzae (strain ATCC 51907 / DSM 11121 / KW20 / Rd).